Consider the following 109-residue polypeptide: Large ribosomal subunit protein uL22 (109 aa).

This sequence belongs to the universal ribosomal protein uL22 family. In terms of assembly, part of the 50S ribosomal subunit.

Its function is as follows. This protein binds specifically to 23S rRNA; its binding is stimulated by other ribosomal proteins, e.g. L4, L17, and L20. It is important during the early stages of 50S assembly. It makes multiple contacts with different domains of the 23S rRNA in the assembled 50S subunit and ribosome. Functionally, the globular domain of the protein is located near the polypeptide exit tunnel on the outside of the subunit, while an extended beta-hairpin is found that lines the wall of the exit tunnel in the center of the 70S ribosome. This Azoarcus sp. (strain BH72) protein is Large ribosomal subunit protein uL22.